The chain runs to 691 residues: MSRSRSSAKAVQFKHESEEEEEDEEEQLPSRRMHSYGDAAAIGSGVPAFLAKLWRLVDDADTNRLICWTKDGQSFVIQNQAQFAKELLPLNYKHNNMASFIRQLNMYGFHKITSIDNGGLRFDRDEIEFSHPFFKRNSPFLLDQIKRKISNNKNGDDKGVLKPEAMSKILTDVKVMRGRQDNLDSRFSAMKQENEVLWREIASLRQKHAKQQQIVNKLIQFLITIVQPSRNMSGVKRHVQLMINNTPEIDRARTTSETESESGGGPVIHELREELLDEVMNPSPAGYTAASHYDQESVSPPAVERPRSNMSISSHNVDYSNQSVEDLLLQGNGTAGGNILVGGAASPMAQSVSQSPAQHDVYTVTEAPDSHVQEVPNSPPYYEEQNVLTTPMVREQEQQKRQQLKENNKLRRQAGDVILDAGDILVDSSSPKAQRTSIQHSTQPDVMVQPMIIKSEPENSSGLMDLMTPANDLYSVNFISEDMPTDIFEDALLPDGVEEAAKLDQQQKFGQSTVSSGKFASNFDVPTNSTLLDANQASTSKAAAKAQASEEEGMAVAKYSGAENGNNRDTNNSQLLRMASVDELHGHLESMQDELETLKDLLRGDGVAIDQNMLMGLFNDSDLMDNYGLSFPNDSISSEKKAPSGSELISYQPMYDLSDILDTDDGNNDQEASRRQMQTQSSVLNTPRHEL.

The segment at 1–31 (MSRSRSSAKAVQFKHESEEEEEDEEEQLPSR) is disordered. The span at 18 to 27 (EEEEEDEEEQ) shows a compositional bias: acidic residues. A DNA-binding region spans residues 46-150 (VPAFLAKLWR…LLDQIKRKIS (105 aa)). Serine 256 is subject to Phosphoserine. Threonine 258 is subject to Phosphothreonine. Residues serine 260, serine 283, serine 299, and serine 580 each carry the phosphoserine modification. The segment at 288–307 (TAASHYDQESVSPPAVERPR) is disordered. The tract at residues 658 to 691 (SDILDTDDGNNDQEASRRQMQTQSSVLNTPRHEL) is disordered. Residues 659–668 (DILDTDDGNN) are compositionally biased toward acidic residues. The segment covering 675–685 (RQMQTQSSVLN) has biased composition (polar residues).

This sequence belongs to the HSF family. In terms of assembly, homotrimer. In terms of processing, exhibits temperature-dependent phosphorylation.

It localises to the nucleus. Functionally, DNA-binding protein that specifically binds heat shock promoter elements (HSE) and activates transcription. In higher eukaryotes, HSF is unable to bind to the HSE unless the cells are heat shocked. The sequence is that of Heat shock factor protein (Hsf) from Drosophila melanogaster (Fruit fly).